Consider the following 430-residue polypeptide: UDP-N-acetylglucosamine 1-carboxyvinyltransferase (430 aa).

Phosphoenolpyruvate is bound at residue 22–23 (KN). Arginine 102 contacts UDP-N-acetyl-alpha-D-glucosamine. The active-site Proton donor is cysteine 126. Residue cysteine 126 is modified to 2-(S-cysteinyl)pyruvic acid O-phosphothioketal. UDP-N-acetyl-alpha-D-glucosamine is bound by residues 131-135 (RPVDL), 172-175 (KVSV), aspartate 317, and isoleucine 339.

It belongs to the EPSP synthase family. MurA subfamily.

It localises to the cytoplasm. The enzyme catalyses phosphoenolpyruvate + UDP-N-acetyl-alpha-D-glucosamine = UDP-N-acetyl-3-O-(1-carboxyvinyl)-alpha-D-glucosamine + phosphate. Its pathway is cell wall biogenesis; peptidoglycan biosynthesis. In terms of biological role, cell wall formation. Adds enolpyruvyl to UDP-N-acetylglucosamine. The protein is UDP-N-acetylglucosamine 1-carboxyvinyltransferase of Rhizobium etli (strain ATCC 51251 / DSM 11541 / JCM 21823 / NBRC 15573 / CFN 42).